The sequence spans 863 residues: Transforming growth factor-beta receptor-associated protein 1 homolog (863 aa).

Residues 23-297 (RINIECIECC…QLLQDFEGKV (275 aa)) enclose the CNH domain. The stretch at 564–729 (RPTSEERRGQ…LLSVYLDPDV (166 aa)) is one CHCR repeat.

Belongs to the TRAP1 family. As to quaternary structure, component of the putative class C core vacuole/endosome tethering (CORVET) complex.

Its subcellular location is the cytoplasm. It is found in the early endosome. In terms of biological role, plays a role in the TGF-beta signaling pathway. Plays a role in vesicle-mediated protein trafficking of the endocytic membrane transport pathway. Believed to act as a component of the putative CORVET endosomal tethering complexes which is proposed to be involved in the Rab5-to-Rab7 endosome conversion probably implicating MON1A/B, and via binding SNAREs and SNARE complexes to mediate tethering and docking events during SNARE-mediated membrane fusion. The CORVET complex is proposed to function as a Rab5 effector to mediate early endosome fusion probably in specific endosome subpopulations. The protein is Transforming growth factor-beta receptor-associated protein 1 homolog (tgfbrap1) of Danio rerio (Zebrafish).